Reading from the N-terminus, the 110-residue chain is uncharacterized protein (110 aa).

Positions 86–110 (SEEIDEPVMKKRHRRKGSPHRAPFF) are disordered. The segment covering 95 to 104 (KKRHRRKGSP) has biased composition (basic residues).

This is an uncharacterized protein from Arabidopsis thaliana (Mouse-ear cress).